Reading from the N-terminus, the 429-residue chain is C4-dicarboxylate transport protein (429 aa).

Transmembrane regions (helical) follow at residues 9 to 29 (VLYV…HFYP), 45 to 65 (LIKM…IAGM), 79 to 99 (LLYF…ATHI), 149 to 169 (GEIL…AHLG), 185 to 205 (VLFG…FGAM), 223 to 243 (LIGT…GTIA), 308 to 328 (IYMT…LTWM), and 356 to 376 (AATL…ILGI).

Belongs to the dicarboxylate/amino acid:cation symporter (DAACS) (TC 2.A.23) family.

The protein resides in the cell inner membrane. Its function is as follows. Responsible for the transport of dicarboxylates such as succinate, fumarate, and malate from the periplasm across the membrane. The sequence is that of C4-dicarboxylate transport protein from Burkholderia ambifaria (strain MC40-6).